A 559-amino-acid chain; its full sequence is BTB/POZ domain-containing protein At5g47800 (559 aa).

Residues 28–96 enclose the BTB domain; sequence NDLVIRINNT…CYDITINLSA (69 aa). One can recognise an NPH3 domain in the interval 199 to 476; it reads DWWTEDISDL…VQALFFDQES (278 aa). Tyr-417 carries the post-translational modification Phosphotyrosine. The segment covering 477-489 has biased composition (low complexity); the sequence is GSKGASSRSESQE. Disordered stretches follow at residues 477-502 and 524-559; these read GSKG…TDEH and EGCK…SRDR. Composition is skewed to basic and acidic residues over residues 492 to 502 and 524 to 541; these read TRGKETPTDEH and EGCK…DPKK.

The protein belongs to the NPH3 family.

The protein operates within protein modification; protein ubiquitination. In terms of biological role, may act as a substrate-specific adapter of an E3 ubiquitin-protein ligase complex (CUL3-RBX1-BTB) which mediates the ubiquitination and subsequent proteasomal degradation of target proteins. This is BTB/POZ domain-containing protein At5g47800 from Arabidopsis thaliana (Mouse-ear cress).